The primary structure comprises 367 residues: Phosphoribosylaminoimidazole-succinocarboxamide synthase (367 aa).

This sequence belongs to the SAICAR synthetase family.

The enzyme catalyses 5-amino-1-(5-phospho-D-ribosyl)imidazole-4-carboxylate + L-aspartate + ATP = (2S)-2-[5-amino-1-(5-phospho-beta-D-ribosyl)imidazole-4-carboxamido]succinate + ADP + phosphate + 2 H(+). It participates in purine metabolism; IMP biosynthesis via de novo pathway; 5-amino-1-(5-phospho-D-ribosyl)imidazole-4-carboxamide from 5-amino-1-(5-phospho-D-ribosyl)imidazole-4-carboxylate: step 1/2. The sequence is that of Phosphoribosylaminoimidazole-succinocarboxamide synthase from Shewanella baltica (strain OS185).